We begin with the raw amino-acid sequence, 229 residues long: ATP synthase subunit a (229 aa).

The next 6 membrane-spanning stretches (helical) occupy residues 25-45 (ADAVVYTWLIMIGLVVLSIAA), 82-102 (FFPLVATLALFILVSNLIGLV), 104-124 (GFFPPTANINTTAACAVVVFV), 142-162 (FLGPIAWLAPMMFFIEVIGHL), 181-201 (LVLIIFFGLAPFIVPLPMMLM), and 202-222 (GVLVSFIQAFVFMLLAMIYIQ).

Belongs to the ATPase A chain family. As to quaternary structure, F-type ATPases have 2 components, CF(1) - the catalytic core - and CF(0) - the membrane proton channel. CF(1) has five subunits: alpha(3), beta(3), gamma(1), delta(1), epsilon(1). CF(0) has three main subunits: a(1), b(2) and c(9-12). The alpha and beta chains form an alternating ring which encloses part of the gamma chain. CF(1) is attached to CF(0) by a central stalk formed by the gamma and epsilon chains, while a peripheral stalk is formed by the delta and b chains.

The protein resides in the cell inner membrane. Functionally, key component of the proton channel; it plays a direct role in the translocation of protons across the membrane. This is ATP synthase subunit a from Citrifermentans bemidjiense (strain ATCC BAA-1014 / DSM 16622 / JCM 12645 / Bem) (Geobacter bemidjiensis).